A 270-amino-acid polypeptide reads, in one-letter code: Non-structural maintenance of chromosomes element 1 homolog (270 aa).

The RING-type; atypical zinc-finger motif lies at 185–226; it reads CNVCHKIAIQCQLCENCGIPLHLQCAGIYFRGIANPLCPNCK. The interval 236-270 is disordered; the sequence is LSQVSSQGPSHSQAAPVRGRNQRSRNISTVARTSR. Polar residues-rich tracts occupy residues 237–248 and 259–270; these read SQVSSQGPSHSQ and SRNISTVARTSR.

It belongs to the NSE1 family. Component of the SMC5-SMC6 complex.

The protein resides in the nucleus. The protein localises to the chromosome. Its subcellular location is the telomere. The catalysed reaction is S-ubiquitinyl-[E2 ubiquitin-conjugating enzyme]-L-cysteine + [acceptor protein]-L-lysine = [E2 ubiquitin-conjugating enzyme]-L-cysteine + N(6)-ubiquitinyl-[acceptor protein]-L-lysine.. Its function is as follows. RING-type zinc finger-containing E3 ubiquitin ligase that assembles with melanoma antigen protein (MAGE) to catalyze the direct transfer of ubiquitin from E2 ubiquitin-conjugating enzyme to a specific substrate. Within MAGE-RING ubiquitin ligase complex, MAGE stimulates and specifies ubiquitin ligase activity likely through recruitment and/or stabilization of the E2 ubiquitin-conjugating enzyme at the E3:substrate complex. Involved in maintenance of genome integrity, DNA damage response and DNA repair. This is Non-structural maintenance of chromosomes element 1 homolog (nsmce1) from Xenopus tropicalis (Western clawed frog).